Here is a 379-residue protein sequence, read N- to C-terminus: Glutamate 5-kinase (379 aa).

K15 is a binding site for ATP. The substrate site is built by S59, D146, and N158. T178–D179 contributes to the ATP binding site. The PUA domain maps to R285 to S363.

Belongs to the glutamate 5-kinase family.

Its subcellular location is the cytoplasm. It catalyses the reaction L-glutamate + ATP = L-glutamyl 5-phosphate + ADP. It participates in amino-acid biosynthesis; L-proline biosynthesis; L-glutamate 5-semialdehyde from L-glutamate: step 1/2. In terms of biological role, catalyzes the transfer of a phosphate group to glutamate to form L-glutamate 5-phosphate. This Paracidovorax citrulli (strain AAC00-1) (Acidovorax citrulli) protein is Glutamate 5-kinase.